The following is a 257-amino-acid chain: Phosphonates import ATP-binding protein PhnC 1 (257 aa).

An ABC transporter domain is found at 2–246 (LKITNLTKRY…EMDTIYAGVP (245 aa)). 35-42 (GSSGAGKS) is a binding site for ATP.

Belongs to the ABC transporter superfamily. Phosphonates importer (TC 3.A.1.9.1) family. In terms of assembly, the complex is composed of two ATP-binding proteins (PhnC), two transmembrane proteins (PhnE) and a solute-binding protein (PhnD).

It localises to the cell inner membrane. It catalyses the reaction phosphonate(out) + ATP + H2O = phosphonate(in) + ADP + phosphate + H(+). In terms of biological role, part of the ABC transporter complex PhnCDE involved in phosphonates import. Responsible for energy coupling to the transport system. This Ruegeria sp. (strain TM1040) (Silicibacter sp.) protein is Phosphonates import ATP-binding protein PhnC 1.